Consider the following 402-residue polypeptide: Formate-dependent phosphoribosylglycinamide formyltransferase (402 aa).

Residues 23-24 and Glu83 contribute to the N(1)-(5-phospho-beta-D-ribosyl)glycinamide site; that span reads EL. Residues Arg116, Lys157, 162–167, 197–200, and Glu205 contribute to the ATP site; these read SSGKGQ and ESQI. In terms of domain architecture, ATP-grasp spans 121–316; it reads RLAAEELGLP…EFELHARAIL (196 aa). Residues Glu275 and Glu287 each coordinate Mg(2+). Residues Asp294, Lys363, and 370 to 371 contribute to the N(1)-(5-phospho-beta-D-ribosyl)glycinamide site; that span reads RR.

The protein belongs to the PurK/PurT family. In terms of assembly, homodimer.

It catalyses the reaction N(1)-(5-phospho-beta-D-ribosyl)glycinamide + formate + ATP = N(2)-formyl-N(1)-(5-phospho-beta-D-ribosyl)glycinamide + ADP + phosphate + H(+). It participates in purine metabolism; IMP biosynthesis via de novo pathway; N(2)-formyl-N(1)-(5-phospho-D-ribosyl)glycinamide from N(1)-(5-phospho-D-ribosyl)glycinamide (formate route): step 1/1. Its function is as follows. Involved in the de novo purine biosynthesis. Catalyzes the transfer of formate to 5-phospho-ribosyl-glycinamide (GAR), producing 5-phospho-ribosyl-N-formylglycinamide (FGAR). Formate is provided by PurU via hydrolysis of 10-formyl-tetrahydrofolate. The chain is Formate-dependent phosphoribosylglycinamide formyltransferase from Acinetobacter baumannii (strain ATCC 17978 / DSM 105126 / CIP 53.77 / LMG 1025 / NCDC KC755 / 5377).